Here is a 120-residue protein sequence, read N- to C-terminus: Spermidine export protein MdtJ (120 aa).

The next 4 helical transmembrane spans lie at 1–21 (MFYW…TLSM), 31–51 (AGFI…SFAV), 54–74 (IALG…ITIF), and 81–101 (EALS…IVLI).

It belongs to the drug/metabolite transporter (DMT) superfamily. Small multidrug resistance (SMR) (TC 2.A.7.1) family. MdtJ subfamily. As to quaternary structure, forms a complex with MdtI.

Its subcellular location is the cell inner membrane. Catalyzes the excretion of spermidine. This chain is Spermidine export protein MdtJ, found in Salmonella choleraesuis (strain SC-B67).